Consider the following 196-residue polypeptide: ATP-dependent Clp protease proteolytic subunit (196 aa).

Ser-96 (nucleophile) is an active-site residue. The active site involves His-121.

This sequence belongs to the peptidase S14 family. In terms of assembly, fourteen ClpP subunits assemble into 2 heptameric rings which stack back to back to give a disk-like structure with a central cavity, resembling the structure of eukaryotic proteasomes.

The protein localises to the cytoplasm. It carries out the reaction Hydrolysis of proteins to small peptides in the presence of ATP and magnesium. alpha-casein is the usual test substrate. In the absence of ATP, only oligopeptides shorter than five residues are hydrolyzed (such as succinyl-Leu-Tyr-|-NHMec, and Leu-Tyr-Leu-|-Tyr-Trp, in which cleavage of the -Tyr-|-Leu- and -Tyr-|-Trp bonds also occurs).. In terms of biological role, cleaves peptides in various proteins in a process that requires ATP hydrolysis. Has a chymotrypsin-like activity. Plays a major role in the degradation of misfolded proteins. This Streptococcus sanguinis (strain SK36) protein is ATP-dependent Clp protease proteolytic subunit.